We begin with the raw amino-acid sequence, 447 residues long: UDP-N-acetylmuramate--L-alanine ligase (447 aa).

Position 108-114 (108-114 (GSHGKTS)) interacts with ATP.

The protein belongs to the MurCDEF family.

The protein localises to the cytoplasm. The enzyme catalyses UDP-N-acetyl-alpha-D-muramate + L-alanine + ATP = UDP-N-acetyl-alpha-D-muramoyl-L-alanine + ADP + phosphate + H(+). It participates in cell wall biogenesis; peptidoglycan biosynthesis. Functionally, cell wall formation. The chain is UDP-N-acetylmuramate--L-alanine ligase from Listeria monocytogenes serotype 4b (strain F2365).